A 421-amino-acid polypeptide reads, in one-letter code: Serine hydroxymethyltransferase (421 aa).

(6S)-5,6,7,8-tetrahydrofolate-binding positions include Leu-121 and 125-127 (GHL). Lys-229 carries the post-translational modification N6-(pyridoxal phosphate)lysine.

The protein belongs to the SHMT family. Homodimer. Pyridoxal 5'-phosphate is required as a cofactor.

The protein localises to the cytoplasm. It catalyses the reaction (6R)-5,10-methylene-5,6,7,8-tetrahydrofolate + glycine + H2O = (6S)-5,6,7,8-tetrahydrofolate + L-serine. The protein operates within one-carbon metabolism; tetrahydrofolate interconversion. It functions in the pathway amino-acid biosynthesis; glycine biosynthesis; glycine from L-serine: step 1/1. Its function is as follows. Catalyzes the reversible interconversion of serine and glycine with tetrahydrofolate (THF) serving as the one-carbon carrier. This reaction serves as the major source of one-carbon groups required for the biosynthesis of purines, thymidylate, methionine, and other important biomolecules. Also exhibits THF-independent aldolase activity toward beta-hydroxyamino acids, producing glycine and aldehydes, via a retro-aldol mechanism. The chain is Serine hydroxymethyltransferase from Actinobacillus pleuropneumoniae serotype 7 (strain AP76).